Reading from the N-terminus, the 471-residue chain is Glutamate--tRNA ligase (471 aa).

A 'HIGH' region motif is present at residues 9–19 (PSPTGYLHVGG). Zn(2+) contacts are provided by C98, C100, C125, and H127. The 'KMSKS' region motif lies at 237–241 (KLSKR). Residue K240 coordinates ATP.

The protein belongs to the class-I aminoacyl-tRNA synthetase family. Glutamate--tRNA ligase type 1 subfamily. Monomer. Zn(2+) serves as cofactor.

It localises to the cytoplasm. It catalyses the reaction tRNA(Glu) + L-glutamate + ATP = L-glutamyl-tRNA(Glu) + AMP + diphosphate. Functionally, catalyzes the attachment of glutamate to tRNA(Glu) in a two-step reaction: glutamate is first activated by ATP to form Glu-AMP and then transferred to the acceptor end of tRNA(Glu). This Escherichia coli O6:K15:H31 (strain 536 / UPEC) protein is Glutamate--tRNA ligase.